A 365-amino-acid chain; its full sequence is Protein RecA (365 aa).

73 to 80 (GPESSGKT) is a binding site for ATP.

Belongs to the RecA family.

It localises to the cytoplasm. In terms of biological role, can catalyze the hydrolysis of ATP in the presence of single-stranded DNA, the ATP-dependent uptake of single-stranded DNA by duplex DNA, and the ATP-dependent hybridization of homologous single-stranded DNAs. It interacts with LexA causing its activation and leading to its autocatalytic cleavage. In Prochlorococcus marinus (strain AS9601), this protein is Protein RecA.